We begin with the raw amino-acid sequence, 493 residues long: 1-aminocyclopropane-1-carboxylate synthase CMW33 (493 aa).

K279 bears the N6-(pyridoxal phosphate)lysine mark.

The protein belongs to the class-I pyridoxal-phosphate-dependent aminotransferase family. In terms of assembly, homodimer. It depends on pyridoxal 5'-phosphate as a cofactor.

It carries out the reaction S-adenosyl-L-methionine = 1-aminocyclopropane-1-carboxylate + S-methyl-5'-thioadenosine + H(+). It functions in the pathway alkene biosynthesis; ethylene biosynthesis via S-adenosyl-L-methionine; ethylene from S-adenosyl-L-methionine: step 1/2. Its function is as follows. Catalyzes the formation of 1-aminocyclopropane-1-carboxylate, a direct precursor of ethylene in higher plants. This Cucurbita maxima (Pumpkin) protein is 1-aminocyclopropane-1-carboxylate synthase CMW33 (ACS1).